A 370-amino-acid chain; its full sequence is Phospho-2-dehydro-3-deoxyheptonate aldolase, tyrosine-inhibited (370 aa).

The protein belongs to the class-I DAHP synthase family.

The catalysed reaction is D-erythrose 4-phosphate + phosphoenolpyruvate + H2O = 7-phospho-2-dehydro-3-deoxy-D-arabino-heptonate + phosphate. The protein operates within metabolic intermediate biosynthesis; chorismate biosynthesis; chorismate from D-erythrose 4-phosphate and phosphoenolpyruvate: step 1/7. With respect to regulation, inhibited by tyrosine. Stereospecific condensation of phosphoenolpyruvate (PEP) and D-erythrose-4-phosphate (E4P) giving rise to 3-deoxy-D-arabino-heptulosonate-7-phosphate (DAHP). This chain is Phospho-2-dehydro-3-deoxyheptonate aldolase, tyrosine-inhibited (ARO4), found in Candida albicans (strain SC5314 / ATCC MYA-2876) (Yeast).